A 277-amino-acid polypeptide reads, in one-letter code: Carbonyl reductase [NADPH] 3 (277 aa).

N-acetylserine is present on Ser2. Residues 10 to 34 (VTGANRGIGLAIARELCRQFSGDVV), 38 to 42 (RDVAR), 63 to 64 (DI), and Asn90 contribute to the NADP(+) site. Ser30 bears the Phosphoserine mark. Ser140 contacts substrate. The active-site Proton acceptor is Tyr194. Residues 194–198 (YGVSK) and Asp239 each bind NADP(+).

Belongs to the short-chain dehydrogenases/reductases (SDR) family. Detected in ovary, pancreas, intestine, colon, kidney, brain, thymus, lung, heart, liver, spleen, leukocyte, prostate and testis.

It localises to the cytoplasm. The catalysed reaction is a secondary alcohol + NADP(+) = a ketone + NADPH + H(+). It catalyses the reaction a quinone + NADPH + H(+) = a quinol + NADP(+). Its function is as follows. Catalyzes the NADPH-dependent reduction of carbonyl compounds to their corresponding alcohols. Has low NADPH-dependent oxidoreductase activity. Acts on several orthoquinones, acts as well on non-quinone compounds, such as isatin or on the anticancer drug oracin. Best substrates for CBR3 is 1,2- naphthoquinone, hence could play a role in protection against cytotoxicity of exogenous quinones. Exerts activity toward ortho-quinones but not paraquinones. No endogenous substrate for CBR3 except isatin has been identified. This is Carbonyl reductase [NADPH] 3 from Homo sapiens (Human).